The primary structure comprises 149 residues: Nucleoside diphosphate kinase (149 aa).

Residues K9, F57, R85, T91, R102, and N112 each contribute to the ATP site. The active-site Pros-phosphohistidine intermediate is the H115.

It belongs to the NDK family. Homotetramer. The cofactor is Mg(2+).

The protein resides in the cytoplasm. It catalyses the reaction a 2'-deoxyribonucleoside 5'-diphosphate + ATP = a 2'-deoxyribonucleoside 5'-triphosphate + ADP. The enzyme catalyses a ribonucleoside 5'-diphosphate + ATP = a ribonucleoside 5'-triphosphate + ADP. Functionally, major role in the synthesis of nucleoside triphosphates other than ATP. The ATP gamma phosphate is transferred to the NDP beta phosphate via a ping-pong mechanism, using a phosphorylated active-site intermediate. This chain is Nucleoside diphosphate kinase, found in Thermomicrobium roseum (strain ATCC 27502 / DSM 5159 / P-2).